A 341-amino-acid chain; its full sequence is Phosphoribosylformylglycinamidine cyclo-ligase (341 aa).

The protein belongs to the AIR synthase family.

It is found in the cytoplasm. The enzyme catalyses 2-formamido-N(1)-(5-O-phospho-beta-D-ribosyl)acetamidine + ATP = 5-amino-1-(5-phospho-beta-D-ribosyl)imidazole + ADP + phosphate + H(+). The protein operates within purine metabolism; IMP biosynthesis via de novo pathway; 5-amino-1-(5-phospho-D-ribosyl)imidazole from N(2)-formyl-N(1)-(5-phospho-D-ribosyl)glycinamide: step 2/2. This chain is Phosphoribosylformylglycinamidine cyclo-ligase, found in Alkaliphilus oremlandii (strain OhILAs) (Clostridium oremlandii (strain OhILAs)).